The chain runs to 245 residues: Suppressor of aph-1 (245 aa).

The 49-residue stretch at 12–60 (DTKWHYLGPDSEKYGPYMSKDMLFWLQAGYFNDGLQLKTENEPNYHTLG) folds into the GYF domain. The interval 126–166 (NQNGPPMGAQMHSQPPSEPIDAGSLSHTPDSENETRLNEQT) is disordered.

In terms of biological role, involved in negative regulation of early and late embryonic Notch signaling. The polypeptide is Suppressor of aph-1 (Caenorhabditis elegans).